The primary structure comprises 353 residues: UPF0283 membrane protein YcjF (353 aa).

Residues 1-19 (MSEPLKPRIDFAEPLKEEP) are compositionally biased toward basic and acidic residues. Residues 1-35 (MSEPLKPRIDFAEPLKEEPTSAFKAQQTFSEAESR) form a disordered region. 3 consecutive transmembrane segments (helical) span residues 70 to 90 (MVMG…VQWT), 100 to 120 (VALG…GSVV), and 213 to 233 (ESTL…FIAW).

It belongs to the UPF0283 family.

Its subcellular location is the cell inner membrane. The protein is UPF0283 membrane protein YcjF of Salmonella gallinarum (strain 287/91 / NCTC 13346).